Consider the following 214-residue polypeptide: tRNA (guanine-N(7)-)-methyltransferase (214 aa).

Positions 44, 69, 96, and 118 each coordinate S-adenosyl-L-methionine. The active site involves Asp118. Residues Lys122, Asp154, and 191–194 (TEYE) each bind substrate.

It belongs to the class I-like SAM-binding methyltransferase superfamily. TrmB family.

The catalysed reaction is guanosine(46) in tRNA + S-adenosyl-L-methionine = N(7)-methylguanosine(46) in tRNA + S-adenosyl-L-homocysteine. Its pathway is tRNA modification; N(7)-methylguanine-tRNA biosynthesis. Functionally, catalyzes the formation of N(7)-methylguanine at position 46 (m7G46) in tRNA. The polypeptide is tRNA (guanine-N(7)-)-methyltransferase (Listeria monocytogenes serovar 1/2a (strain ATCC BAA-679 / EGD-e)).